A 102-amino-acid polypeptide reads, in one-letter code: Small ribosomal subunit protein uS10 (102 aa).

The protein belongs to the universal ribosomal protein uS10 family. As to quaternary structure, part of the 30S ribosomal subunit.

Involved in the binding of tRNA to the ribosomes. This chain is Small ribosomal subunit protein uS10, found in Geobacter sulfurreducens (strain ATCC 51573 / DSM 12127 / PCA).